Consider the following 450-residue polypeptide: Phosphopentomutase (450 aa).

Serine 93 functions as the Phosphoserine intermediate in the catalytic mechanism. The Mg(2+) site is built by serine 93, aspartate 231, aspartate 233, and aspartate 235. A Phosphoserine; by autocatalysis modification is found at serine 93.

This sequence belongs to the phosphohexose mutase family. As to quaternary structure, homotetramer. Mg(2+) is required as a cofactor. Activated by phosphorylation.

The enzyme catalyses alpha-D-ribose 1-phosphate = D-ribose 5-phosphate. The catalysed reaction is 2-deoxy-alpha-D-ribose 1-phosphate = 2-deoxy-D-ribose 5-phosphate. In terms of biological role, catalyzes the conversion of deoxyribose 1-phosphate to deoxyribose 5-phosphate. Also shows weak activity with glucose 1-phosphate and mannose 1-phosphate. Could be involved in pentose biosynthesis. The chain is Phosphopentomutase from Thermococcus kodakarensis (strain ATCC BAA-918 / JCM 12380 / KOD1) (Pyrococcus kodakaraensis (strain KOD1)).